The sequence spans 509 residues: Maturase K (509 aa).

Belongs to the intron maturase 2 family. MatK subfamily.

It localises to the plastid. The protein localises to the chloroplast. Usually encoded in the trnK tRNA gene intron. Probably assists in splicing its own and other chloroplast group II introns. This is Maturase K from Nicotiana tomentosiformis (Tobacco).